The primary structure comprises 307 residues: Methionyl-tRNA formyltransferase (307 aa).

108–111 (SLLP) contributes to the (6S)-5,6,7,8-tetrahydrofolate binding site.

It belongs to the Fmt family.

It carries out the reaction L-methionyl-tRNA(fMet) + (6R)-10-formyltetrahydrofolate = N-formyl-L-methionyl-tRNA(fMet) + (6S)-5,6,7,8-tetrahydrofolate + H(+). Attaches a formyl group to the free amino group of methionyl-tRNA(fMet). The formyl group appears to play a dual role in the initiator identity of N-formylmethionyl-tRNA by promoting its recognition by IF2 and preventing the misappropriation of this tRNA by the elongation apparatus. The protein is Methionyl-tRNA formyltransferase of Xanthomonas oryzae pv. oryzae (strain MAFF 311018).